The following is a 468-amino-acid chain: Phosphoglucosamine mutase (468 aa).

Catalysis depends on Ser112, which acts as the Phosphoserine intermediate. Positions 112, 254, 256, and 258 each coordinate Mg(2+). At Ser112 the chain carries Phosphoserine.

It belongs to the phosphohexose mutase family. Requires Mg(2+) as cofactor. In terms of processing, activated by phosphorylation.

It carries out the reaction alpha-D-glucosamine 1-phosphate = D-glucosamine 6-phosphate. In terms of biological role, catalyzes the conversion of glucosamine-6-phosphate to glucosamine-1-phosphate. This chain is Phosphoglucosamine mutase, found in Prochlorococcus marinus (strain MIT 9313).